The sequence spans 484 residues: Ferrochelatase-2, chloroplastic (484 aa).

This sequence belongs to the ferrochelatase family.

Its subcellular location is the plastid. It is found in the chloroplast. The catalysed reaction is heme b + 2 H(+) = protoporphyrin IX + Fe(2+). The protein operates within porphyrin-containing compound metabolism; protoheme biosynthesis; protoheme from protoporphyrin-IX: step 1/1. Catalyzes the ferrous insertion into protoporphyrin IX. In Hordeum vulgare (Barley), this protein is Ferrochelatase-2, chloroplastic (HEMH).